A 508-amino-acid chain; its full sequence is Steroid 17-alpha-hydroxylase/17,20 lyase (508 aa).

Asn-202 provides a ligand contact to substrate. Cys-442 serves as a coordination point for heme.

It belongs to the cytochrome P450 family. The cofactor is heme.

Its subcellular location is the endoplasmic reticulum membrane. It is found in the microsome membrane. The enzyme catalyses a C21-steroid + reduced [NADPH--hemoprotein reductase] + O2 = a 17alpha-hydroxy-C21-steroid + oxidized [NADPH--hemoprotein reductase] + H2O + H(+). It catalyses the reaction progesterone + reduced [NADPH--hemoprotein reductase] + O2 = 17alpha-hydroxyprogesterone + oxidized [NADPH--hemoprotein reductase] + H2O + H(+). It carries out the reaction pregnenolone + reduced [NADPH--hemoprotein reductase] + O2 = 17alpha-hydroxypregnenolone + oxidized [NADPH--hemoprotein reductase] + H2O + H(+). The catalysed reaction is 17alpha-hydroxyprogesterone + reduced [NADPH--hemoprotein reductase] + O2 = androst-4-ene-3,17-dione + acetate + oxidized [NADPH--hemoprotein reductase] + H2O + 2 H(+). The enzyme catalyses 17alpha-hydroxyprogesterone + reduced [NADPH--hemoprotein reductase] + O2 = 16alpha,17alpha-dihydroxyprogesterone + oxidized [NADPH--hemoprotein reductase] + H2O + H(+). It catalyses the reaction 16alpha,17alpha-dihydroxyprogesterone + reduced [NADPH--hemoprotein reductase] + O2 = 6beta,16alpha,17alpha-trihydroxyprogesterone + oxidized [NADPH--hemoprotein reductase] + H2O + H(+). It carries out the reaction 17alpha-hydroxypregnenolone + reduced [NADPH--hemoprotein reductase] + O2 = 3beta-hydroxyandrost-5-en-17-one + acetate + oxidized [NADPH--hemoprotein reductase] + H2O + 2 H(+). The catalysed reaction is 16alpha,17alpha-dihydroxypregnenolone + reduced [NADPH--hemoprotein reductase] + O2 = 3beta,16alpha-dihydroxy-androst-5-en-17-one + acetate + oxidized [NADPH--hemoprotein reductase] + H2O + 2 H(+). The enzyme catalyses 3beta-hydroxyandrost-5-en-17-one + reduced [NADPH--hemoprotein reductase] + O2 = 3beta,16alpha-dihydroxy-androst-5-en-17-one + oxidized [NADPH--hemoprotein reductase] + H2O + H(+). It catalyses the reaction androst-4-ene-3,17-dione + reduced [NADPH--hemoprotein reductase] + O2 = 16alpha-hydroxyandrost-4-ene-3,17-dione + oxidized [NADPH--hemoprotein reductase] + H2O + H(+). It participates in steroid hormone biosynthesis. It functions in the pathway steroid biosynthesis; glucocorticoid biosynthesis. With respect to regulation, regulated predominantly by intracellular cAMP levels. The 17,20-lyase activity is stimulated by cytochrome b5, which acts as an allosteric effector increasing the Vmax of the lyase activity. Its function is as follows. A cytochrome P450 monooxygenase involved in corticoid and androgen biosynthesis. Catalyzes 17-alpha hydroxylation of C21 steroids, which is common for both pathways. A second oxidative step, required only for androgen synthesis, involves an acyl-carbon cleavage. The 17-alpha hydroxy intermediates, as part of adrenal glucocorticoids biosynthesis pathway, are precursors of cortisol. Hydroxylates steroid hormones, pregnenolone and progesterone to form 17-alpha hydroxy metabolites, followed by the cleavage of the C17-C20 bond to form C19 steroids, dehydroepiandrosterone (DHEA) and androstenedione. Has 16-alpha hydroxylase activity. Catalyzes 16-alpha hydroxylation of 17-alpha hydroxy pregnenolone, followed by the cleavage of the C17-C20 bond to form 16-alpha-hydroxy DHEA. Also 16-alpha hydroxylates androgens, relevant for estriol synthesis. Mechanistically, uses molecular oxygen inserting one oxygen atom into a substrate, and reducing the second into a water molecule, with two electrons provided by NADPH via cytochrome P450 reductase (CPR; NADPH-ferrihemoprotein reductase). This chain is Steroid 17-alpha-hydroxylase/17,20 lyase (CYP17A1), found in Pan troglodytes (Chimpanzee).